The sequence spans 349 residues: 3-isopropylmalate dehydrogenase (349 aa).

The substrate site is built by R91, R101, R129, and D219. Mg(2+) contacts are provided by D219, D243, and D247. 277–289 is an NAD(+) binding site; it reads GSAPDIAGLGKAN.

It belongs to the isocitrate and isopropylmalate dehydrogenases family. LeuB type 1 subfamily. As to quaternary structure, homodimer. The cofactor is Mg(2+). Requires Mn(2+) as cofactor.

Its subcellular location is the cytoplasm. It catalyses the reaction (2R,3S)-3-isopropylmalate + NAD(+) = 4-methyl-2-oxopentanoate + CO2 + NADH. It participates in amino-acid biosynthesis; L-leucine biosynthesis; L-leucine from 3-methyl-2-oxobutanoate: step 3/4. Catalyzes the oxidation of 3-carboxy-2-hydroxy-4-methylpentanoate (3-isopropylmalate) to 3-carboxy-4-methyl-2-oxopentanoate. The product decarboxylates to 4-methyl-2 oxopentanoate. The protein is 3-isopropylmalate dehydrogenase of Zymomonas mobilis subsp. mobilis (strain ATCC 31821 / ZM4 / CP4).